A 240-amino-acid polypeptide reads, in one-letter code: Proteasome subunit beta type-1 (240 aa).

Met-1 carries the post-translational modification N-acetylmethionine. The propeptide occupies Met-1–Met-27. Residue Ser-57 is glycosylated (O-linked (GlcNAc) serine). Residues Ser-61 and Ser-67 each carry the phosphoserine modification. Residue Tyr-149 is modified to Phosphotyrosine. Ser-161 is subject to Phosphoserine. Lys-203 is subject to N6-acetyllysine. Residue Ser-208 is glycosylated (O-linked (GlcNAc) serine).

This sequence belongs to the peptidase T1B family. The 26S proteasome consists of a 20S proteasome core and two 19S regulatory subunits. The 20S proteasome core is a barrel-shaped complex made of 28 subunits that are arranged in four stacked rings. The two outer rings are each formed by seven alpha subunits, and the two inner rings are formed by seven beta subunits. The proteolytic activity is exerted by three beta-subunits PSMB5, PSMB6 and PSMB7. Interacts with SERPINB2. Interacts with RFPL4A. In terms of tissue distribution, ubiquitous.

The protein localises to the cytoplasm. It localises to the nucleus. In terms of biological role, non-catalytic component of the 20S core proteasome complex involved in the proteolytic degradation of most intracellular proteins. This complex plays numerous essential roles within the cell by associating with different regulatory particles. Associated with two 19S regulatory particles, forms the 26S proteasome and thus participates in the ATP-dependent degradation of ubiquitinated proteins. The 26S proteasome plays a key role in the maintenance of protein homeostasis by removing misfolded or damaged proteins that could impair cellular functions, and by removing proteins whose functions are no longer required. Associated with the PA200 or PA28, the 20S proteasome mediates ubiquitin-independent protein degradation. This type of proteolysis is required in several pathways including spermatogenesis (20S-PA200 complex) or generation of a subset of MHC class I-presented antigenic peptides (20S-PA28 complex). The polypeptide is Proteasome subunit beta type-1 (Psmb1) (Rattus norvegicus (Rat)).